Here is a 199-residue protein sequence, read N- to C-terminus: Recombination protein RecR (199 aa).

The C4-type zinc finger occupies 57 to 72; that stretch reads CQSCRTFTEQSLCPIC. One can recognise a Toprim domain in the interval 81–176; sequence GVICVVETPA…IISRIAHGVP (96 aa).

This sequence belongs to the RecR family.

In terms of biological role, may play a role in DNA repair. It seems to be involved in an RecBC-independent recombinational process of DNA repair. It may act with RecF and RecO. The protein is Recombination protein RecR of Shewanella denitrificans (strain OS217 / ATCC BAA-1090 / DSM 15013).